A 79-amino-acid polypeptide reads, in one-letter code: RNA-binding protein Hfq (79 aa).

The Sm domain occupies 10–70 (DAFLNHVRKT…ISTIMPAQPI (61 aa)).

The protein belongs to the Hfq family. Homohexamer.

In terms of biological role, RNA chaperone that binds small regulatory RNA (sRNAs) and mRNAs to facilitate mRNA translational regulation in response to envelope stress, environmental stress and changes in metabolite concentrations. Also binds with high specificity to tRNAs. The polypeptide is RNA-binding protein Hfq (Ruegeria sp. (strain TM1040) (Silicibacter sp.)).